We begin with the raw amino-acid sequence, 71 residues long: DNA gyrase inhibitor YacG (71 aa).

Zn(2+) is bound by residues C8, C11, C27, and C31. A disordered region spans residues 48–71 (VVEDDDLPPDAPGGESGGASGRLN). Residues 61–71 (GESGGASGRLN) are compositionally biased toward gly residues.

The protein belongs to the DNA gyrase inhibitor YacG family. Interacts with GyrB. It depends on Zn(2+) as a cofactor.

In terms of biological role, inhibits all the catalytic activities of DNA gyrase by preventing its interaction with DNA. Acts by binding directly to the C-terminal domain of GyrB, which probably disrupts DNA binding by the gyrase. This chain is DNA gyrase inhibitor YacG, found in Ralstonia nicotianae (strain ATCC BAA-1114 / GMI1000) (Ralstonia solanacearum).